The primary structure comprises 332 residues: MKVSYEELKSEFKRVLLSRNVREDIAEECATVFADTTQAGAYSHGVNRFPRFIQQLENGDIKPEAQPTKVLSLGAIEQWDAHQAIGNLTAKKMMDRAMELASQNGVGIVALRNANHWMRGGSYGWQAAEKGYIGICWTNALAVMPPWGAKECRIGTNPLIVAVPTTPITMVDMSCSMYSYGMLEVHRLQGRQTFVDAGFDDNNNPTRDPATVEKNRRLMPMGFWKGSGLSIVLDMIATLLSNGESTAAVTEDKDDEYCVSQVFIAIEVDRLIDGKTKDEKLNRIMDYVKTAEPVDPNQPVRLPGHEFTTILADNKANGIPVDDTVWAKLKSL.

Catalysis depends on His-44, which acts as the Proton donor. NAD(+) contacts are provided by residues 168 to 174 (ITMVDMS), 224 to 225 (WK), and 304 to 306 (GHE).

Belongs to the LDH2/MDH2 oxidoreductase family. DlgD subfamily. As to quaternary structure, homodimer.

Its subcellular location is the cytoplasm. The enzyme catalyses 3-dehydro-L-gulonate + NAD(+) = 2,3-dioxo-L-gulonate + NADH + H(+). It carries out the reaction 3-dehydro-L-gulonate + NADP(+) = 2,3-dioxo-L-gulonate + NADPH + H(+). Catalyzes the reduction of 2,3-diketo-L-gulonate in the presence of NADH, to form 3-keto-L-gulonate. In Mannheimia succiniciproducens (strain KCTC 0769BP / MBEL55E), this protein is 2,3-diketo-L-gulonate reductase.